The primary structure comprises 327 residues: Eukaryotic translation initiation factor 3 subunit I (327 aa).

WD repeat units lie at residues 8 to 49, 51 to 89, 188 to 227, 229 to 268, and 285 to 324; these read GHER…GSYD, HNGAVWDIDVSWDTTKCVTASGDLTVKIWDAELGNCLYT, VHRYSVQDLQLSPRGDFLISASRDKTAALLDVNDLKKLKQ, KSERPVNSACISPNRDHICLGGGEDAMQVTQTSVSAGHFE, and GHFGPINTMAWHPSGTIIATGGEDGYIRIQEFDEDYLGFT.

This sequence belongs to the eIF-3 subunit I family. Component of the eukaryotic translation initiation factor 3 (eIF-3) complex.

The protein localises to the cytoplasm. Component of the eukaryotic translation initiation factor 3 (eIF-3) complex, which is involved in protein synthesis of a specialized repertoire of mRNAs and, together with other initiation factors, stimulates binding of mRNA and methionyl-tRNAi to the 40S ribosome. The eIF-3 complex specifically targets and initiates translation of a subset of mRNAs involved in cell proliferation. The polypeptide is Eukaryotic translation initiation factor 3 subunit I (Caenorhabditis elegans).